The primary structure comprises 628 residues: Netrin-4 (628 aa).

Positions 1-18 (MGSCARLLLLWGCTVVAA) are cleaved as a signal peptide. A Laminin N-terminal domain is found at 30 to 261 (CEKACNPRMG…AIYDFIVKGS (232 aa)). N56 and N163 each carry an N-linked (GlcNAc...) asparagine glycan. Intrachain disulfides connect C262–C271, C264–C293, C295–C304, C307–C329, C332–C341, C334–C359, C362–C371, C374–C392, C395–C413, C397–C420, C422–C431, and C434–C446. 3 consecutive Laminin EGF-like domains span residues 262-331 (CFCN…ECRT), 332-394 (CKCN…ACKP), and 395-448 (CSCH…GCRP). N-linked (GlcNAc...) asparagine glycosylation occurs at N353. N-linked (GlcNAc...) asparagine glycosylation occurs at N483. Cystine bridges form between C506/C576 and C520/C627. Residues 506 to 627 (CECKEQTLGN…KVMDILKREC (122 aa)) enclose the NTR domain.

May form a homodimer.

Its subcellular location is the secreted. It localises to the extracellular space. It is found in the extracellular matrix. Functionally, may play an important role in neural, kidney and vascular development. The protein is Netrin-4 (NTN4) of Pongo abelii (Sumatran orangutan).